Consider the following 366-residue polypeptide: Ferredoxin--NADP reductase (366 aa).

7 residues coordinate FAD: D51, Q59, Y64, V104, F139, D308, and T349.

Belongs to the ferredoxin--NADP reductase type 2 family. As to quaternary structure, homodimer. Requires FAD as cofactor.

It catalyses the reaction 2 reduced [2Fe-2S]-[ferredoxin] + NADP(+) + H(+) = 2 oxidized [2Fe-2S]-[ferredoxin] + NADPH. This chain is Ferredoxin--NADP reductase, found in Polaromonas naphthalenivorans (strain CJ2).